We begin with the raw amino-acid sequence, 705 residues long: Translation initiation factor IF-2 (705 aa).

Residues 40–124 (DDQIKALDKK…QPAAPKEIPS (85 aa)) form a disordered region. Basic and acidic residues predominate over residues 41–58 (DQIKALDKKFKKEQKNDN). The segment covering 59–77 (KQSTQNNHQKSNNQNQNKG) has biased composition (low complexity). Positions 94–108 (KGNKKNNRNNKKNNK) are enriched in basic residues. A tr-type G domain is found at 207 to 376 (ERPAVVTIMG…GLVAEVQELK (170 aa)). The segment at 216–223 (GHVDHGKT) is G1. 216-223 (GHVDHGKT) contributes to the GTP binding site. The segment at 241-245 (GITQH) is G2. Residues 262–265 (DTPG) are G3. Residues 262–266 (DTPGH) and 316–319 (NKID) each bind GTP. The interval 316-319 (NKID) is G4. The interval 352-354 (SAL) is G5.

Belongs to the TRAFAC class translation factor GTPase superfamily. Classic translation factor GTPase family. IF-2 subfamily.

Its subcellular location is the cytoplasm. Its function is as follows. One of the essential components for the initiation of protein synthesis. Protects formylmethionyl-tRNA from spontaneous hydrolysis and promotes its binding to the 30S ribosomal subunits. Also involved in the hydrolysis of GTP during the formation of the 70S ribosomal complex. This is Translation initiation factor IF-2 from Staphylococcus aureus (strain MSSA476).